Here is a 508-residue protein sequence, read N- to C-terminus: Photosystem II CP47 reaction center protein (508 aa).

A run of 6 helical transmembrane segments spans residues 21–36, 101–115, 140–156, 203–218, 237–252, and 457–472; these read AVHI…WAGS, IVFS…IWHW, GIHL…FGAF, IAAG…FHLS, VLSS…AFVV, and SFAL…HGSR.

It belongs to the PsbB/PsbC family. PsbB subfamily. In terms of assembly, PSII is composed of 1 copy each of membrane proteins PsbA, PsbB, PsbC, PsbD, PsbE, PsbF, PsbH, PsbI, PsbJ, PsbK, PsbL, PsbM, PsbT, PsbX, PsbY, PsbZ, Psb30/Ycf12, at least 3 peripheral proteins of the oxygen-evolving complex and a large number of cofactors. It forms dimeric complexes. The cofactor is Binds multiple chlorophylls. PSII binds additional chlorophylls, carotenoids and specific lipids..

The protein resides in the plastid. It localises to the chloroplast thylakoid membrane. Its function is as follows. One of the components of the core complex of photosystem II (PSII). It binds chlorophyll and helps catalyze the primary light-induced photochemical processes of PSII. PSII is a light-driven water:plastoquinone oxidoreductase, using light energy to abstract electrons from H(2)O, generating O(2) and a proton gradient subsequently used for ATP formation. The sequence is that of Photosystem II CP47 reaction center protein from Populus trichocarpa (Western balsam poplar).